Here is a 548-residue protein sequence, read N- to C-terminus: ETS domain-containing transcription factor ERF (548 aa).

Residues threonine 3 and threonine 7 each carry the phosphothreonine modification. Phosphoserine is present on residues serine 20 and serine 24. The ETS DNA-binding region spans 27–107 (IQLWHFILEL…KGKRFTYKFN (81 aa)). Disordered regions lie at residues 130–169 (QSAPPVPSGGSHFRFPPSTPSEVLSPTEDPRSPPACSSSS), 184–225 (GSVS…LARL), and 280–304 (SPTLSPMYPSGGGGPSGSGGGSHFS). Residues serine 185 and serine 190 each carry the phosphoserine modification. The segment covering 289–301 (SGGGGPSGSGGGS) has biased composition (gly residues). A Phosphoserine modification is found at serine 327. Residues 342 to 478 (PQRPDKCPLP…GEAPGASQCM (137 aa)) form a disordered region. The segment covering 348–361 (CPLPPMAPETPPVP) has biased composition (pro residues). Low complexity-rich tracts occupy residues 362–373 (SSASSSSSSSSS) and 394–403 (KAVAGADKSG). Phosphoserine occurs at positions 431 and 435. Positions 431-451 (SEGESEEVEVTDISDEDEEDG) are enriched in acidic residues. Threonine 441 carries the phosphothreonine modification. Serine 444 bears the Phosphoserine mark. Residues lysine 465, lysine 481, and lysine 512 each participate in a glycyl lysine isopeptide (Lys-Gly) (interchain with G-Cter in SUMO2) cross-link. The tract at residues 492-548 (CRLEGGGGPAGGFEDEGEDKKVRGEGPGEAGGPLTPRRVSSDLQHATAQLSLEHRDS) is disordered. Threonine 526 is modified (phosphothreonine; by MAPK1). A phosphoserine mark is found at serine 531, serine 532, and serine 548. Polar residues predominate over residues 532 to 541 (SDLQHATAQL).

It belongs to the ETS family. In terms of processing, phosphorylated by multiple kinases including MAPK1/ERK2 at THR-526. Phosphorylation regulates the activity of ERF. Highest levels in testis, ovary, pancreas, and heart.

Its subcellular location is the nucleus. Functionally, potent transcriptional repressor that binds to the H1 element of the Ets2 promoter. May regulate other genes involved in cellular proliferation. Required for extraembryonic ectoderm differentiation, ectoplacental cone cavity closure, and chorioallantoic attachment. May be important for regulating trophoblast stem cell differentiation. This chain is ETS domain-containing transcription factor ERF (ERF), found in Homo sapiens (Human).